The chain runs to 524 residues: Zinc finger CCCH-type with G patch domain-containing protein (524 aa).

The disordered stretch occupies residues 105–142 (SEESQPLGSNDETSTCSKGSEEEEEEEEEEEDNTSGMK). Polar residues predominate over residues 106-122 (EESQPLGSNDETSTCSK). Over residues 125–137 (EEEEEEEEEEEDN) the composition is skewed to acidic residues. The C3H1-type zinc-finger motif lies at 184–210 (KAMKPCPFFLDGKCLFNDNCRFSHGQV). A disordered region spans residues 279–298 (RGSDSSSSSSSDEEEDGAAE). In terms of domain architecture, G-patch spans 326–372 (TRGIGSKLLVRMGYEFGKGLGRNAEGRVEPIQAVVLPKGKSLDQCME). Disordered regions lie at residues 375-402 (QRKK…GGAK) and 500-524 (GLQQ…MTEF). Over residues 376 to 393 (RKKAGGKHKHKTSKRRPK) the composition is skewed to basic residues.

It localises to the nucleus. Functionally, transcription repressor that specifically binds the 5'-GGAG[GA]A[GA]A-3' consensus sequence. Represses transcription by recruiting the chromatin multiprotein complex NuRD to target promoters. Negatively regulates expression of EGFR, a gene involved in cell proliferation, survival and migration. This chain is Zinc finger CCCH-type with G patch domain-containing protein (zgpat), found in Xenopus laevis (African clawed frog).